Consider the following 314-residue polypeptide: Malate dehydrogenase (314 aa).

NAD(+) is bound by residues 11 to 16 (GSGNIG) and aspartate 35. Positions 84 and 90 each coordinate substrate. NAD(+) is bound by residues asparagine 97 and 120 to 122 (ITN). 2 residues coordinate substrate: asparagine 122 and arginine 153. The active-site Proton acceptor is the histidine 177.

This sequence belongs to the LDH/MDH superfamily. MDH type 3 family.

It carries out the reaction (S)-malate + NAD(+) = oxaloacetate + NADH + H(+). Catalyzes the reversible oxidation of malate to oxaloacetate. The polypeptide is Malate dehydrogenase (Rickettsia typhi (strain ATCC VR-144 / Wilmington)).